We begin with the raw amino-acid sequence, 337 residues long: Methylthioribose-1-phosphate isomerase (337 aa).

Residues 51–53 (RGA), R88, and Q187 each bind substrate. The active-site Proton donor is D228. 238–239 (NK) provides a ligand contact to substrate.

It belongs to the eIF-2B alpha/beta/delta subunits family. MtnA subfamily.

The catalysed reaction is 5-(methylsulfanyl)-alpha-D-ribose 1-phosphate = 5-(methylsulfanyl)-D-ribulose 1-phosphate. It participates in amino-acid biosynthesis; L-methionine biosynthesis via salvage pathway; L-methionine from S-methyl-5-thio-alpha-D-ribose 1-phosphate: step 1/6. Its function is as follows. Catalyzes the interconversion of methylthioribose-1-phosphate (MTR-1-P) into methylthioribulose-1-phosphate (MTRu-1-P). The sequence is that of Methylthioribose-1-phosphate isomerase from Anaeromyxobacter sp. (strain Fw109-5).